The chain runs to 307 residues: Oxygen-dependent coproporphyrinogen-III oxidase (307 aa).

Residue S99 participates in substrate binding. The a divalent metal cation site is built by H103 and H113. H113 functions as the Proton donor in the catalytic mechanism. 115-117 serves as a coordination point for substrate; sequence NVR. Residues H152 and H182 each contribute to the a divalent metal cation site. Residues 247–282 are important for dimerization; that stretch reads YVEFNLVFDRGTLFGLQSGGRTESILLSMPPTAGWR. Position 265-267 (265-267) interacts with substrate; that stretch reads GGR.

The protein belongs to the aerobic coproporphyrinogen-III oxidase family. Homodimer. The cofactor is a divalent metal cation.

The protein resides in the cytoplasm. It catalyses the reaction coproporphyrinogen III + O2 + 2 H(+) = protoporphyrinogen IX + 2 CO2 + 2 H2O. It participates in porphyrin-containing compound metabolism; protoporphyrin-IX biosynthesis; protoporphyrinogen-IX from coproporphyrinogen-III (O2 route): step 1/1. Its function is as follows. Involved in the heme biosynthesis. Catalyzes the aerobic oxidative decarboxylation of propionate groups of rings A and B of coproporphyrinogen-III to yield the vinyl groups in protoporphyrinogen-IX. This Burkholderia mallei (strain SAVP1) protein is Oxygen-dependent coproporphyrinogen-III oxidase.